The following is a 320-amino-acid chain: tRNA-cytidine(32) 2-sulfurtransferase (320 aa).

The short motif at 54–59 (SGGKDS) is the PP-loop motif element. Residues Cys-129, Cys-132, and Cys-220 each coordinate [4Fe-4S] cluster.

This sequence belongs to the TtcA family. Homodimer. The cofactor is Mg(2+). [4Fe-4S] cluster is required as a cofactor.

It localises to the cytoplasm. It carries out the reaction cytidine(32) in tRNA + S-sulfanyl-L-cysteinyl-[cysteine desulfurase] + AH2 + ATP = 2-thiocytidine(32) in tRNA + L-cysteinyl-[cysteine desulfurase] + A + AMP + diphosphate + H(+). Its pathway is tRNA modification. Catalyzes the ATP-dependent 2-thiolation of cytidine in position 32 of tRNA, to form 2-thiocytidine (s(2)C32). The sulfur atoms are provided by the cysteine/cysteine desulfurase (IscS) system. The chain is tRNA-cytidine(32) 2-sulfurtransferase from Bordetella pertussis (strain Tohama I / ATCC BAA-589 / NCTC 13251).